A 424-amino-acid polypeptide reads, in one-letter code: 3-phosphoshikimate 1-carboxyvinyltransferase (424 aa).

3-phosphoshikimate is bound by residues Lys-20, Ser-21, and Arg-25. Residue Lys-20 coordinates phosphoenolpyruvate. The phosphoenolpyruvate site is built by Gly-92 and Arg-120. Positions 165, 167, 313, and 340 each coordinate 3-phosphoshikimate. Residue Gln-167 participates in phosphoenolpyruvate binding. Asp-313 functions as the Proton acceptor in the catalytic mechanism. 2 residues coordinate phosphoenolpyruvate: Arg-344 and Arg-386.

This sequence belongs to the EPSP synthase family. In terms of assembly, monomer.

The protein resides in the cytoplasm. The enzyme catalyses 3-phosphoshikimate + phosphoenolpyruvate = 5-O-(1-carboxyvinyl)-3-phosphoshikimate + phosphate. Its pathway is metabolic intermediate biosynthesis; chorismate biosynthesis; chorismate from D-erythrose 4-phosphate and phosphoenolpyruvate: step 6/7. In terms of biological role, catalyzes the transfer of the enolpyruvyl moiety of phosphoenolpyruvate (PEP) to the 5-hydroxyl of shikimate-3-phosphate (S3P) to produce enolpyruvyl shikimate-3-phosphate and inorganic phosphate. The polypeptide is 3-phosphoshikimate 1-carboxyvinyltransferase (Bacillus cytotoxicus (strain DSM 22905 / CIP 110041 / 391-98 / NVH 391-98)).